Reading from the N-terminus, the 181-residue chain is Photosystem I assembly protein Ycf4 (181 aa).

A run of 2 helical transmembrane segments spans residues Tyr19–Ser39 and Val62–Ile82.

The protein belongs to the Ycf4 family.

It localises to the plastid. It is found in the chloroplast thylakoid membrane. In terms of biological role, seems to be required for the assembly of the photosystem I complex. This chain is Photosystem I assembly protein Ycf4, found in Phaeodactylum tricornutum (strain CCAP 1055/1).